Here is a 179-residue protein sequence, read N- to C-terminus: Large ribosomal subunit protein uL5 (179 aa).

K3 carries the N6-acetyllysine modification.

The protein belongs to the universal ribosomal protein uL5 family. As to quaternary structure, part of the 50S ribosomal subunit; part of the 5S rRNA/L5/L18/L25 subcomplex. Contacts the 5S rRNA and the P site tRNA. Forms a bridge to the 30S subunit in the 70S ribosome.

In terms of biological role, this is one of the proteins that bind and probably mediate the attachment of the 5S RNA into the large ribosomal subunit, where it forms part of the central protuberance. In the 70S ribosome it contacts protein S13 of the 30S subunit (bridge B1b), connecting the 2 subunits; this bridge is implicated in subunit movement. Contacts the P site tRNA; the 5S rRNA and some of its associated proteins might help stabilize positioning of ribosome-bound tRNAs. The chain is Large ribosomal subunit protein uL5 from Shigella flexneri.